A 224-amino-acid polypeptide reads, in one-letter code: Biotin transport ATP-binding protein BioM (224 aa).

An ABC transporter domain is found at 3 to 224; it reads IQFESAGVSF…AIARYREIAA (222 aa). 34-41 provides a ligand contact to ATP; sequence GLNGSGKT.

It belongs to the ABC transporter superfamily. As to quaternary structure, part of a biotin transporter complex composed of BioM, BioN and BioY.

It localises to the cell inner membrane. Functionally, involved in biotin uptake. This Rhizobium etli (strain ATCC 51251 / DSM 11541 / JCM 21823 / NBRC 15573 / CFN 42) protein is Biotin transport ATP-binding protein BioM (bioM).